A 292-amino-acid chain; its full sequence is Acetylglutamate kinase (292 aa).

Residues 64-65 (GG), Arg86, and Asn190 each bind substrate.

The protein belongs to the acetylglutamate kinase family. ArgB subfamily.

It is found in the cytoplasm. It catalyses the reaction N-acetyl-L-glutamate + ATP = N-acetyl-L-glutamyl 5-phosphate + ADP. Its pathway is amino-acid biosynthesis; L-arginine biosynthesis; N(2)-acetyl-L-ornithine from L-glutamate: step 2/4. Catalyzes the ATP-dependent phosphorylation of N-acetyl-L-glutamate. The polypeptide is Acetylglutamate kinase (Citrifermentans bemidjiense (strain ATCC BAA-1014 / DSM 16622 / JCM 12645 / Bem) (Geobacter bemidjiensis)).